The following is a 492-amino-acid chain: MDPYKHRPSSGSNSTFWTTNSGAPVWNNNSALTVGERGPILLEDYHLIEKLAQFDRERIPERVVHARGASAKGFFEVTHDISHLTCADFLRAPGVQTPVIVRFSTVVHERGSPETLRDPRGFAVKFYTREGNFDLVGNNMPVFFIRDGMKFPDMVHAFKPSPKTNMQENWRIVDFFSHHPESLHMFSFLFDDVGIPLNYRHMEGFGVNTYTLINKDGKPHLVKFHWKPTCGVKCLLDDEAVTVGGTCHSHATKDLTDSIAAGNYPEWKLYIQTIDPDHEDRFDFDPLDVTKTWPEDIIPLQPVGRMVLNKNIDNFFAENEQLAFCPAIIVPGIHYSDDKLLQTRIFSYADTQRHRLGPNYLMLPVNAPKCAYHNNHHDGSMNFMHRDEEVNYFPSRFDAARHAEKVPIPPRVLTGCREKCVIDKENNFQQAGERYRSFDPARQDRFLQRWVDALSDPRITHELRGIWISYWSQCDASLGQKLASRLNLKPNM.

Positions 1-20 (MDPYKHRPSSGSNSTFWTTN) are disordered. A compositionally biased stretch (polar residues) spans 9 to 20 (SSGSNSTFWTTN). Arginine 62 is a heme binding site. The active site involves histidine 65. Residue arginine 102 participates in heme binding. Asparagine 138 is an active-site residue. Phenylalanine 151 serves as a coordination point for heme. At tyrosine 210 the chain carries Phosphotyrosine. Residues 325-348 (CPAIIVPGIHYSDDKLLQTRIFSY) constitute a cross-link (3-(S-cysteinyl)-tyrosine (Cys-Tyr)). Arginine 344, tyrosine 348, and arginine 355 together coordinate heme. The Peroxisome targeting signal signature appears at 484–492 (SRLNLKPNM).

It belongs to the catalase family. In terms of assembly, homotetramer. Interacts with GLO1 and GLO4; these interactions are disturbed by alpha-hydroxy-2-pyridinemethanesulfonic acid (HPMS) and salicylic acid (SA). Interacts with STRK1 at the plasma membrane. Heme is required as a cofactor. Predominantly expressed in roots and, at low levels, in leaves (e.g. sheaths). Detected in seeds. Also present in panicles and culms. Observed in stems and anthers.

The protein resides in the peroxisome. The protein localises to the glyoxysome. Its subcellular location is the cell membrane. It carries out the reaction 2 H2O2 = O2 + 2 H2O. Its activity is regulated as follows. Strongly inhibited by beta-mercaptoethanol, sodium azide and potassium cyanide. Slightly repressed by 3-amino-1,2,4-triazole (3-AT). Activity is repressed proportionally to increased concentration of NaCl, KCl, LiCl and MgCl(2). In terms of biological role, occurs in almost all aerobically respiring organisms and serves to protect cells from the toxic effects of hydrogen peroxide. May prevent the excessive accumulation of H(2)O(2) during water stress in response to the accumulation of abscisic acid (ABA). Involved in the modulation of ROS levels related to root growth regulation. Required for pollen viability and floret fertility upon heat stress (HS) by detoxifying reactive oxygen species (ROS) and malondialdehyde (MDA) accumulation in developing anthers exposed to HS. The protein is Catalase isozyme B (CATB) of Oryza sativa subsp. japonica (Rice).